Reading from the N-terminus, the 207-residue chain is Dephospho-CoA kinase (207 aa).

The DPCK domain maps to 5–203 (AVGLTGGVAC…ARYRALASVF (199 aa)). 13 to 18 (ACGKSL) serves as a coordination point for ATP.

It belongs to the CoaE family.

It is found in the cytoplasm. The catalysed reaction is 3'-dephospho-CoA + ATP = ADP + CoA + H(+). It functions in the pathway cofactor biosynthesis; coenzyme A biosynthesis; CoA from (R)-pantothenate: step 5/5. In terms of biological role, catalyzes the phosphorylation of the 3'-hydroxyl group of dephosphocoenzyme A to form coenzyme A. The polypeptide is Dephospho-CoA kinase (Xylella fastidiosa (strain Temecula1 / ATCC 700964)).